Consider the following 115-residue polypeptide: Peptidyl-tRNA hydrolase (115 aa).

This sequence belongs to the PTH2 family.

Its subcellular location is the cytoplasm. The enzyme catalyses an N-acyl-L-alpha-aminoacyl-tRNA + H2O = an N-acyl-L-amino acid + a tRNA + H(+). Its function is as follows. The natural substrate for this enzyme may be peptidyl-tRNAs which drop off the ribosome during protein synthesis. The chain is Peptidyl-tRNA hydrolase from Methanosarcina acetivorans (strain ATCC 35395 / DSM 2834 / JCM 12185 / C2A).